The primary structure comprises 226 residues: Probable N-acetyl-alpha-D-glucosaminyl L-malate deacetylase 2 (226 aa).

Residues H13, D16, and H127 each coordinate Zn(2+).

Belongs to the PIGL family. The cofactor is Zn(2+).

It carries out the reaction (S)-malyl N-acetyl-alpha-D-glucosaminide + H2O = (S)-malyl alpha-D-glucosaminide + acetate. Involved in bacillithiol (BSH) biosynthesis. Catalyzes the second step of the pathway, the deacetylation of N-acetylglucosaminylmalate (GlcNAc-Mal) to glucosamine malate (GlcN-Mal). Could also be involved in bacillithiol-detoxifying pathways through formation of S-mercapturic adducts. The sequence is that of Probable N-acetyl-alpha-D-glucosaminyl L-malate deacetylase 2 from Bacillus anthracis.